The sequence spans 957 residues: Glycine dehydrogenase (decarboxylating) (957 aa).

Lysine 708 bears the N6-(pyridoxal phosphate)lysine mark.

This sequence belongs to the GcvP family. As to quaternary structure, the glycine cleavage system is composed of four proteins: P, T, L and H. Pyridoxal 5'-phosphate serves as cofactor.

It catalyses the reaction N(6)-[(R)-lipoyl]-L-lysyl-[glycine-cleavage complex H protein] + glycine + H(+) = N(6)-[(R)-S(8)-aminomethyldihydrolipoyl]-L-lysyl-[glycine-cleavage complex H protein] + CO2. Functionally, the glycine cleavage system catalyzes the degradation of glycine. The P protein binds the alpha-amino group of glycine through its pyridoxal phosphate cofactor; CO(2) is released and the remaining methylamine moiety is then transferred to the lipoamide cofactor of the H protein. The chain is Glycine dehydrogenase (decarboxylating) from Salmonella paratyphi B (strain ATCC BAA-1250 / SPB7).